The sequence spans 304 residues: MRPEKSFQGLILTLQRYWADYGCIILQPYDMEVGAGTFHPATTLRALGPKRWNAAYVQPSRRPKDGRYGENPNRLQHYYQFQVILKPSPEDIQDLYLKSLAAIGVDAALHDIRFVEDDWESPTLGAWGLGWECWCDGMEVSQFTYFQQVAGVECAPVAGELTYGLERLAMYVQGVDNVYDLNFNGRDGAEKVTYGDVFLQAEQEYSRHNFEHADTAMLFEQFKMAEGACKKYLDAGWASDKKDKHLMALPAYDQCIKASHVFNLLDARGVISVTERQSYILRVRELAKACGEAWIHTEAGGVRG.

It belongs to the class-II aminoacyl-tRNA synthetase family. In terms of assembly, tetramer of two alpha and two beta subunits.

Its subcellular location is the cytoplasm. The catalysed reaction is tRNA(Gly) + glycine + ATP = glycyl-tRNA(Gly) + AMP + diphosphate. This chain is Glycine--tRNA ligase alpha subunit, found in Afipia carboxidovorans (strain ATCC 49405 / DSM 1227 / KCTC 32145 / OM5) (Oligotropha carboxidovorans).